The following is a 180-amino-acid chain: Probable chorismate pyruvate-lyase (180 aa).

The substrate site is built by Arg73, Leu111, and Glu170.

It belongs to the UbiC family.

The protein resides in the cytoplasm. The enzyme catalyses chorismate = 4-hydroxybenzoate + pyruvate. It functions in the pathway cofactor biosynthesis; ubiquinone biosynthesis. Its function is as follows. Removes the pyruvyl group from chorismate, with concomitant aromatization of the ring, to provide 4-hydroxybenzoate (4HB) for the ubiquinone pathway. In Nitrosospira multiformis (strain ATCC 25196 / NCIMB 11849 / C 71), this protein is Probable chorismate pyruvate-lyase.